Consider the following 729-residue polypeptide: Fatty acid oxidation complex subunit alpha (729 aa).

Positions 1-189 (MLYKGDTLYL…KIGLVDGVVK (189 aa)) are enoyl-CoA hydratase/isomerase. Asp296 contributes to the substrate binding site. Positions 311–729 (ETPKQAAVLG…ARPVGDLKTA (419 aa)) are 3-hydroxyacyl-CoA dehydrogenase. Residues Met324, Asp343, 400–402 (VVE), Lys407, and Ser429 each bind NAD(+). His450 serves as the catalytic For 3-hydroxyacyl-CoA dehydrogenase activity. Position 453 (Asn453) interacts with NAD(+). Residues Asn500 and Tyr660 each coordinate substrate. The tract at residues 708 to 729 (RHNEPYYPPVEPARPVGDLKTA) is disordered.

The protein in the N-terminal section; belongs to the enoyl-CoA hydratase/isomerase family. It in the C-terminal section; belongs to the 3-hydroxyacyl-CoA dehydrogenase family. In terms of assembly, heterotetramer of two alpha chains (FadB) and two beta chains (FadA).

The catalysed reaction is a (3S)-3-hydroxyacyl-CoA + NAD(+) = a 3-oxoacyl-CoA + NADH + H(+). It carries out the reaction a (3S)-3-hydroxyacyl-CoA = a (2E)-enoyl-CoA + H2O. It catalyses the reaction a 4-saturated-(3S)-3-hydroxyacyl-CoA = a (3E)-enoyl-CoA + H2O. The enzyme catalyses (3S)-3-hydroxybutanoyl-CoA = (3R)-3-hydroxybutanoyl-CoA. The catalysed reaction is a (3Z)-enoyl-CoA = a 4-saturated (2E)-enoyl-CoA. It carries out the reaction a (3E)-enoyl-CoA = a 4-saturated (2E)-enoyl-CoA. The protein operates within lipid metabolism; fatty acid beta-oxidation. Its function is as follows. Involved in the aerobic and anaerobic degradation of long-chain fatty acids via beta-oxidation cycle. Catalyzes the formation of 3-oxoacyl-CoA from enoyl-CoA via L-3-hydroxyacyl-CoA. It can also use D-3-hydroxyacyl-CoA and cis-3-enoyl-CoA as substrate. This Shigella flexneri serotype 5b (strain 8401) protein is Fatty acid oxidation complex subunit alpha.